The following is a 250-amino-acid chain: MSMRDVLISRLIVERYFEKLRNSLELDVAIVGAGPSGLTAAYELAKNGFRVAVFEERNTPGGGIWGGGMMFNEIVLEKELENFLKEVEIEYEVKEDHIVVDSVHFASGLLYRATKAGAIVFNNVSVEDVAVQNGRVCGVVVNWGPTVRLGLHVDPITVKASFVVDGTGHPANVVSLLAKRGLVEMKTEFPMDADEAEKFVVDNTGEIFPGLLVSGMAVCAVHGGPRMGPIFGGMILSGQKVARIVSERLR.

NAD(+) is bound by residues Ser-36, Glu-55–Glu-56, Gly-63, Val-126, and His-152–Asp-154. Fe cation is bound by residues Asp-154 and His-169. Met-216 contacts NAD(+). A glycine-binding site is contributed by Arg-226.

It belongs to the THI4 family. As to quaternary structure, homooctamer; tetramer of dimers. Fe(2+) is required as a cofactor.

The enzyme catalyses hydrogen sulfide + glycine + NAD(+) = ADP-5-ethyl-4-methylthiazole-2-carboxylate + nicotinamide + 3 H2O + H(+). It participates in cofactor biosynthesis; thiamine diphosphate biosynthesis. Involved in the biosynthesis of the thiazole moiety of thiamine. Catalyzes the conversion of NAD and glycine to adenosine diphosphate 5-(2-hydroxyethyl)-4-methylthiazole-2-carboxylate (ADT), an adenylated thiazole intermediate, using free sulfide as a source of sulfur. The sequence is that of Thiamine thiazole synthase from Thermotoga maritima (strain ATCC 43589 / DSM 3109 / JCM 10099 / NBRC 100826 / MSB8).